Reading from the N-terminus, the 2485-residue chain is Polyprotein P1234 (2485 aa).

An Alphavirus-like MT domain is found at 28-259 (EAKQVTDNDH…EKRDLLRSWH (232 aa)). Residues 244-263 (GSTIYHEKRDLLRSWHLPSV) form a nsP1 membrane-binding region. Cysteine 419 is lipidated: S-palmitoyl cysteine; by host. One can recognise a (+)RNA virus helicase ATP-binding domain in the interval 690-841 (ELVDPPFHEF…HEICTQVFHK (152 aa)). A ribonucleoside 5'-triphosphate is bound at residue 721–728 (GVPGSGKS). Residues 842 to 990 (SISRRCTKSV…IEEWQAEHDA (149 aa)) form the (+)RNA virus helicase C-terminal domain. In terms of domain architecture, Peptidase C9 spans 1003 to 1322 (DVFQNKANVC…STLTNIYTGS (320 aa)). The interval 1004-1023 (VFQNKANVCWAKALVPVLKT) is nucleolus localization signal. The active-site For cysteine protease nsP2 activity is cysteine 1012. The short motif at 1056-1065 (VRFFGLDLDS) is the Nuclear export signal element. Histidine 1081 serves as the catalytic For cysteine protease nsP2 activity. The Nuclear localization signal motif lies at 1179 to 1183 (PGKTV). The Macro domain occupies 1328–1489 (GCAPSYHVVR…TLKEAVARRE (162 aa)). Aspartate 1339, asparagine 1353, glycine 1361, glycine 1441, isoleucine 1442, and phenylalanine 1443 together coordinate ADP-D-ribose. 4 residues coordinate Zn(2+): cysteine 1596, cysteine 1598, cysteine 1621, and cysteine 1639. Residues 1783–1810 (PRTVFRNPPQPAPRTRTPSLAPSRASSR) form a disordered region. Residues 1798–1810 (RTPSLAPSRASSR) are compositionally biased toward polar residues. 2 repeat units span residues 1810–1831 (RISL…ELEA) and 1844–1865 (RTSL…EFEA). Positions 1810–1865 (RISLVSNPPGVNRVITREELEALTPSRAPSRSVSRTSLVSNPPGVNRVITREEFEA) are 2 X 21 AA approximate repeats, binding to host FXR family members. Residues 2242–2357 (DCVLETDIAS…KGVKSDKLMA (116 aa)) form the RdRp catalytic domain.

Interacts with non-structural protein 3. Interacts with RNA-directed RNA polymerase nsP4. Interacts with protease nsP2. interacts with itself. In terms of assembly, interacts with mRNA-capping enzyme nsP1. Interacts with host DDX1. Interacts with host DDX3. Interacts (via C-terminus) with host FXR1; this interaction inhibits the formation of host stress granules on viral mRNAs and the nsp3-FXR1 complexes bind viral RNAs and probably orchestrate the assembly of viral replication complexes. Interacts (via C-terminus) with host FXR2; this interaction inhibits the formation of host stress granules on viral mRNAs and the nsp3-FXR2 complexes bind viral RNAs and probably orchestrate the assembly of viral replication complexes. Interacts (via C-terminus) with host FMR1; this interaction inhibits the formation of host stress granules on viral mRNAs and the nsp3-FMR1 complexes bind viral RNAs and probably orchestrate the assembly of viral replication complexes. As to quaternary structure, interacts with mRNA-capping enzyme nsP1. Interacts with protease nsP2. interacts with itself. Interacts with RNA-directed RNA polymerase nsP4. Interacts with mRNA-capping enzyme nsP1. Interacts with KPNA1/karyopherin-alpha1; this interaction probably allows the active transport of protease nsP2 into the host nucleus. Mg(2+) is required as a cofactor. The cofactor is Mn(2+). In terms of processing, specific enzymatic cleavages in vivo yield mature proteins. The processing of the polyprotein is temporally regulated. In early stages (1.7 hpi), P1234 is first cleaved in trans through its nsP2 protease activity, releasing P123' and nsP4, which associate to form the early replication complex. At the same time, P1234 is also cut at the nsP1/nsP2 site early in infection but with lower efficiency. After replication of the viral minus-strand RNAs (4 hpi), the polyproteins are cut at the nsP1/nsP2 and nsP2/nsP3 sites very efficiently, preventing accumulation of P123' and P1234 and allowing the formation of the late replication complex. NsP3'/nsP4 site is not cleaved anymore and P34 is produced rather than nsP4. Specific enzymatic cleavages in vivo yield mature proteins. The processing of the polyprotein is temporally regulated. In early stages (1.7 hpi), P123 is cleaved at the nsP1/nsP2 site with low efficiency. After replication of the viral minus-strand RNAs (4 hpi), the polyproteins are cut at the nsP1/nsP2 and nsP2/nsP3 sites very efficiently, preventing accumulation of P123 and allowing the formation of the late replication complex. Post-translationally, specific enzymatic cleavages in vivo yield mature proteins. The processing of the polyprotein is temporally regulated. In early stages (1.7 hpi), P123' is cleaved at the nsP1/nsP2 site with low efficiency. After replication of the viral minus-strand RNAs (4 hpi), the polyproteins are cut at the nsP1/nsP2 and nsP2/nsP3 sites very efficiently, preventing accumulation of P123' and allowing the formation of the late replication complex. In terms of processing, palmitoylated by host palmitoyltransferases ZDHHC2 and ZDHHC19. Phosphorylated by host on serines and threonines. Post-translationally, ubiquitinated; targets the protein for rapid degradation via the ubiquitin system. Nsp4 is present in extremely low quantities due to low frequency of translation through the amber stop-codon and the degradation by the ubiquitin pathway.

The protein resides in the host cytoplasmic vesicle membrane. The protein localises to the host cell membrane. Its subcellular location is the host cell projection. It localises to the host filopodium. It is found in the host nucleus. The protein resides in the host cytoplasm. It carries out the reaction GTP + S-adenosyl-L-methionine = N(7)-methyl-GTP + S-adenosyl-L-homocysteine. The catalysed reaction is N(7)-methyl-GTP + L-histidyl-[protein] = N(tele)-(N(7)-methylguanosine 5'-phospho)-L-histidyl-[protein] + diphosphate. The enzyme catalyses N(tele)-(N(7)-methylguanosine 5'-phospho)-L-histidyl-[protein] + a 5'-end diphospho-(purine-ribonucleoside) in mRNA + H(+) = a 5'-end (N(7)-methyl 5'-triphosphoguanosine)-(purine-ribonucleoside) in mRNA + L-histidyl-[protein]. It catalyses the reaction a 5'-end triphospho-ribonucleoside in mRNA + H2O = a 5'-end diphospho-ribonucleoside in mRNA + phosphate + H(+). It carries out the reaction a ribonucleoside 5'-triphosphate + H2O = a ribonucleoside 5'-diphosphate + phosphate + H(+). The catalysed reaction is ATP + H2O = ADP + phosphate + H(+). The enzyme catalyses RNA(n) + a ribonucleoside 5'-triphosphate = RNA(n+1) + diphosphate. It catalyses the reaction 4-O-(ADP-D-ribosyl)-L-aspartyl-[protein] + H2O = L-aspartyl-[protein] + ADP-D-ribose + H(+). It carries out the reaction 5-O-(ADP-D-ribosyl)-L-glutamyl-[protein] + H2O = L-glutamyl-[protein] + ADP-D-ribose + H(+). The catalysed reaction is RNA(n) + ATP = RNA(n)-3'-adenine ribonucleotide + diphosphate. The enzyme catalyses ADP-alpha-D-ribose 1''-phosphate + H2O = ADP-D-ribose + phosphate. With respect to regulation, inhibited by sinefungin. Inactive precursor of the viral replicase, which is activated by cleavages carried out by the viral protease nsP2. Functionally, the early replication complex formed by the polyprotein P123 and nsP4 synthesizes the minus-strand RNAs (antigenome). Polyprotein P123 is a short-lived polyprotein that accumulates during early stage of infection. As soon P123 is cleaved into mature proteins, the plus-strand RNAs synthesis begins. Its function is as follows. The early replication complex formed by the polyprotein P123' and nsP4 synthesizes minus-strand RNAs (antigenome). Polyprotein P123' is a short-lived polyprotein that accumulates during early stage of infection. As soon P123' is cleaved into mature proteins, the plus-strand RNAs synthesis begins. In terms of biological role, cytoplasmic capping enzyme that catalyzes two virus-specific reactions: methyltransferase and nsP1 guanylyltransferase. mRNA-capping is necessary since all viral RNAs are synthesized in the cytoplasm, and host capping enzymes are restricted to the nucleus. The enzymatic reaction involves a covalent link between 7-methyl-GMP and nsP1, whereas eukaryotic capping enzymes form a covalent complex only with GMP. NsP1 capping consists in the following reactions: GTP is first methylated into 7-methyl-GMP and then is covalently linked to nsP1 to form the m7GMp-nsP1 complex from which 7-methyl-GMP complex is transferred to the mRNA to create the cap structure. NsP1 is also needed for the initiation of the minus-strand RNAs synthesis. Probably serves as a membrane anchor for the replication complex composed of nsP1-nsP4. Nsp1 is needed for the initiation of the minus-strand RNAs synthesis. Palmitoylated nsP1 is remodeling host cell cytoskeleton, and induces filopodium-like structure formation at the surface of the host cell. Multifunctional protein whose N-terminus is part of the RNA polymerase complex and displays NTPase, RNA triphosphatase and helicase activities. NTPase and RNA triphosphatase are involved in viral RNA capping and helicase keeps a check on the dsRNA replication intermediates. The C-terminus harbors a protease that specifically cleaves the polyproteins and releases the mature proteins. Required for the shutoff of minus-strand RNAs synthesis. Inhibits host translation to ensure maximal viral gene expression and evade host immune response. Functionally, seems to be essential for minus-strand RNAs and subgenomic 26S mRNAs synthesis. Displays mono-ADP-ribosylhydrolase activity. ADP-ribosylation is a post-translational modification that controls various processes of the host cell and the virus probably needs to revert it for optimal viral replication. Binds proteins of FXR family and sequesters them into the viral RNA replication complexes thereby inhibiting the formation of host stress granules on viral mRNAs. The nsp3-FXR complexes bind viral RNAs and probably orchestrate the assembly of viral replication complexes, thanks to the ability of FXR family members to self-assemble and bind DNA. Its function is as follows. Seems to be essential for minus-strand RNAs and subgenomic 26S mRNAs synthesis. Displays mono-ADP-ribosylhydrolase activity. ADP-ribosylation is a post-translational modification that controls various processes of the host cell and the virus probably needs to revert it for optimal viral replication. Binds proteins of FXR family and sequesters them into the viral RNA replication complexes thereby inhibiting the formation of host stress granules on viral mRNAs. The nsp3'-FXR complexes bind viral RNAs and probably orchestrate the assembly of viral replication complexes, thanks to the ability of FXR family members to self-assemble and bind DNA. In terms of biological role, RNA dependent RNA polymerase. Replicates genomic and antigenomic RNA by recognizing replications specific signals. The early replication complex formed by the polyprotein P123 and nsP4 synthesizes minus-strand RNAs. The late replication complex composed of fully processed nsP1-nsP4 is responsible for the production of genomic and subgenomic plus-strand RNAs. This is Polyprotein P1234 from Venezuelan equine encephalitis virus (strain 3880) (VEEV).